A 303-amino-acid chain; its full sequence is Probable 5-dehydro-4-deoxyglucarate dehydratase (303 aa).

This sequence belongs to the DapA family.

It catalyses the reaction 5-dehydro-4-deoxy-D-glucarate + H(+) = 2,5-dioxopentanoate + CO2 + H2O. It functions in the pathway carbohydrate acid metabolism; D-glucarate degradation; 2,5-dioxopentanoate from D-glucarate: step 2/2. This Variovorax paradoxus (strain S110) protein is Probable 5-dehydro-4-deoxyglucarate dehydratase.